A 402-amino-acid chain; its full sequence is UDP-glucose 6-dehydrogenase (402 aa).

NAD(+)-binding positions include 2-19 (KIAVAGSGYVGLSLGVLL), V11, D29, K34, T83, T118, and E145. Substrate is bound by residues 141–145 (EFLRE), K204, N208, 249–253 (YNNPS), and G257. Y259 lines the NAD(+) pocket. Catalysis depends on C260, which acts as the Nucleophile. K263 lines the NAD(+) pocket. Residue K320 coordinates substrate. R327 is a binding site for NAD(+).

It belongs to the UDP-glucose/GDP-mannose dehydrogenase family.

It catalyses the reaction UDP-alpha-D-glucose + 2 NAD(+) + H2O = UDP-alpha-D-glucuronate + 2 NADH + 3 H(+). Its pathway is nucleotide-sugar biosynthesis; UDP-alpha-D-glucuronate biosynthesis; UDP-alpha-D-glucuronate from UDP-alpha-D-glucose: step 1/1. Its function is as follows. Catalyzes the formation of UDP-glucuronic acid which is required for capsular hyaluronic acid synthesis. The chain is UDP-glucose 6-dehydrogenase (hasB) from Streptococcus pyogenes serotype M1.